Reading from the N-terminus, the 511-residue chain is Keratin, type II cytoskeletal 72 (511 aa).

The segment at 1 to 124 is head; that stretch reads MSRQLTHFPR…DPEIQRVRAQ (124 aa). The interval 125–160 is coil 1A; sequence EREQIKALNNKFASFIDKVRFLEQQNQVLETKWNLL. The IF rod domain maps to 125–438; sequence EREQIKALNN…KLLESEECRM (314 aa). Positions 161–179 are linker 1; that stretch reads QQLDLNNCRKNLEPIYEGY. A coil 1B region spans residues 180–271; it reads ISNLQKQLEM…CLYEGEITQI (92 aa). The segment at 272–295 is linker 12; that stretch reads QSHISDTSIVLSMDNNRDLDLDSI. A coil 2 region spans residues 296-434; sequence IAEVRAQYEE…ATYRKLLESE (139 aa). Positions 435 to 511 are tail; the sequence is ECRMSGEYPN…SSCATKKASR (77 aa). A disordered region spans residues 486-511; it reads GSCGSELKDPLAKTSGSSCATKKASR.

Belongs to the intermediate filament family. As to quaternary structure, heterotetramer of two type I and two type II keratins. Highly expressed in hair follicles from scalp and eyebrow. Also expressed in palmoplantar epidermis. Not expressed in face skin despite the presence of fine hairs histologically. In hair, it is specifically present in the inner root sheath (IRS) of the hair follicle. Present in the IRS cuticle, but not in Henle or Huxley layers of the IRS. In the IRS cuticle, its presence is delayed up to the height of the apex of the dermal papilla (at protein level).

Its function is as follows. Has a role in hair formation. Specific component of keratin intermediate filaments in the inner root sheath (IRS) of the hair follicle. This Homo sapiens (Human) protein is Keratin, type II cytoskeletal 72 (KRT72).